The following is a 393-amino-acid chain: Mitogen-activated protein kinase SIPK (393 aa).

Polar residues predominate over residues 1-11; the sequence is MDGSGQQTDTM. The disordered stretch occupies residues 1–31; it reads MDGSGQQTDTMMSDAGAEQPPPAPQPVAGMD. One can recognise a Protein kinase domain in the interval 60–345; sequence KPPILPIGKG…VEGALAHPYL (286 aa). ATP is bound by residues 66-74 and lysine 89; that span reads IGKGAYGIV. Catalysis depends on aspartate 186, which acts as the Proton acceptor. The TXY signature appears at 218–220; it reads TEY.

Belongs to the protein kinase superfamily. CMGC Ser/Thr protein kinase family. MAP kinase subfamily. Interacts with SIPKK.

It carries out the reaction L-tyrosyl-[protein] + ATP = O-phospho-L-tyrosyl-[protein] + ADP + H(+). The catalysed reaction is L-seryl-[protein] + ATP = O-phospho-L-seryl-[protein] + ADP + H(+). The enzyme catalyses L-threonyl-[protein] + ATP = O-phospho-L-threonyl-[protein] + ADP + H(+). Activated by threonine and tyrosine phosphorylation. Phosphorylates myelin basic protein (MBP) in vitro. May be involved in disease resistance. This is Mitogen-activated protein kinase SIPK from Nicotiana tabacum (Common tobacco).